A 290-amino-acid polypeptide reads, in one-letter code: HTH-type transcriptional activator RhaR (290 aa).

In terms of domain architecture, HTH araC/xylS-type spans 179–277 (DLIMSALQQS…GMTPRDYRQR (99 aa)). 2 DNA-binding regions (H-T-H motif) span residues 196–217 (ADFC…RQQT) and 244–267 (ISDI…TREA).

Binds DNA as a dimer.

It localises to the cytoplasm. Activates expression of the rhaSR operon in response to L-rhamnose. The protein is HTH-type transcriptional activator RhaR of Yersinia pseudotuberculosis serotype O:1b (strain IP 31758).